The chain runs to 591 residues: Lysyl oxidase homolog 1 (591 aa).

Positions 1–22 (MALALTGWQLVWGACVCVLVHG) are cleaved as a signal peptide. A propeptide spanning residues 23-91 (QQAPPGQGSD…PRRRGGLRRR (69 aa)) is cleaved from the precursor. Disordered regions lie at residues 77–107 (APQA…SDTV) and 233–373 (EYGG…RLSV). The span at 82-92 (PRRRGGLRRRQ) shows a compositional bias: basic residues. The segment covering 298–313 (NGGGGGGTYGGGGGDP) has biased composition (gly residues). The segment at 319-386 (PPYGNMPPEA…YRPNQNGRGL (68 aa)) is interaction with FBLN5. Residues 387–591 (PDLVPDPNYV…STTNCKIVQS (205 aa)) are lysyl-oxidase like. 5 disulfide bridges follow: Cys-412–Cys-418, Cys-465–Cys-514, Cys-498–Cys-504, Cys-525–Cys-535, and Cys-572–Cys-586. The Cu cation site is built by His-466, His-468, and His-470. The lysine tyrosylquinone (Lys-Tyr) cross-link spans 494–529 (KASFCLEDSTCDFGNLKRYACTSHTQGLSPGCYDTY). Tyr-529 carries the 2',4',5'-topaquinone modification.

The protein belongs to the lysyl oxidase family. In terms of assembly, interacts (via propeptide) with EFEMP2. Interacts with FBLN5. Cu cation is required as a cofactor. Requires lysine tyrosylquinone residue as cofactor. In terms of processing, the lysine tyrosylquinone cross-link (LTQ) is generated by condensation of the epsilon-amino group of a lysine with a topaquinone produced by oxidation of tyrosine. Proteolytic processing by a furin-like protease causes removal of N-terminal propeptide resulting in an enzyme largely inactive, but further proteolytic processing by BMP1 results in enzyme activation.

Its subcellular location is the secreted. It localises to the extracellular space. It is found in the extracellular matrix. The enzyme catalyses L-lysyl-[protein] + O2 + H2O = (S)-2-amino-6-oxohexanoyl-[protein] + H2O2 + NH4(+). In terms of biological role, catalyzes the oxidative deamination of lysine and hydroxylysine residues in collagen and elastin, resulting in the formation of covalent cross-linkages, and the stabilization of collagen and elastin fibers. Essential for the elastic fiber homeostasis and for their maintenance at adult age. The sequence is that of Lysyl oxidase homolog 1 (LOXL1) from Bos taurus (Bovine).